The sequence spans 911 residues: Androgen receptor (911 aa).

The segment at 1–549 (MEVQLGLGRV…PIDYYFPPQK (549 aa)) is modulating. The tract at residues 1–578 (MEVQLGLGRV…GSCKVFFKRA (578 aa)) is interaction with ZNF318. Disordered stretches follow at residues 35–164 (QNPG…LSLL) and 192–225 (QQQQQEAVSEGSSSGRAREASGAPTSSKDNYLGG). Residues 44–88 (AASAAPPGASLLLQQQQQQQQQQQQQQQQQQQQQQETSPRQQQQQ) are compositionally biased toward low complexity. S81 bears the Phosphoserine; by CDK9 mark. The residue at position 93 (S93) is a Phosphoserine. Residues 192 to 214 (QQQQQEAVSEGSSSGRAREASGA) show a composition bias toward low complexity. Residues 215-225 (PTSSKDNYLGG) are compositionally biased toward polar residues. Y222 carries the phosphotyrosine; by CSK modification. Phosphoserine is present on S255. Y266 carries the post-translational modification Phosphotyrosine; by CSK and TNK2. 4 positions are modified to phosphotyrosine; by CSK: Y306, Y345, Y356, and Y361. Y362 bears the Phosphotyrosine; by CSK and TNK2 mark. A Glycyl lysine isopeptide (Lys-Gly) (interchain with G-Cter in SUMO) cross-link involves residue K385. Residue Y392 is modified to Phosphotyrosine; by CSK. A Glycyl lysine isopeptide (Lys-Gly) (interchain with G-Cter in SUMO) cross-link involves residue K512. Phosphotyrosine; by CSK occurs at positions 526 and 543. The tract at residues 543 to 910 (YYFPPQKTCL…GKVKPIYFHT (368 aa)) is interaction with LPXN. 2 NR C4-type zinc fingers span residues 551–571 (CLICGDEASGCHYGALTCGSC) and 587–611 (CASRNDCTIDKFRRKNCPSCRLRKC). The nuclear receptor DNA-binding region spans 551-623 (CLICGDEASG…AGMTLGARKL (73 aa)). An interaction with HIPK3 region spans residues 563-653 (YGALTCGSCK…TEETTQKLTV (91 aa)). The interval 583–910 (QKYLCASRND…GKVKPIYFHT (328 aa)) is interaction with CCAR1. An interaction with KAT7 region spans residues 616–910 (MTLGARKLKK…GKVKPIYFHT (295 aa)). Residue S642 is modified to Phosphoserine; by STK4/MST1. In terms of domain architecture, NR LBD spans 660 to 891 (ECQPIFLNVL…DFPEMMAEII (232 aa)). 2 residues coordinate 17beta-hydroxy-5alpha-androstan-3-one: N697 and R744. Residues K837 and K839 each participate in a glycyl lysine isopeptide (Lys-Gly) (interchain with G-Cter in ubiquitin) cross-link. T869 contributes to the 17beta-hydroxy-5alpha-androstan-3-one binding site. A Phosphotyrosine; by CSK modification is found at Y907.

This sequence belongs to the nuclear hormone receptor family. NR3 subfamily. In terms of assembly, binds DNA as a homodimer. Part of a ternary complex containing AR, EFCAB6/DJBP and PARK7. Interacts with HIPK3 and NR0B2 in the presence of androgen. The ligand binding domain interacts with KAT7/HBO1 in the presence of dihydrotestosterone. Interacts with EFCAB6/DJBP, PQBP1, RANBP9, RBAK, SPDEF, SRA1, TGFB1I1 and RREB1. Interacts with ZMIZ1/ZIMP10 and ZMIZ2/ZMIP7 which both enhance its transactivation activity. Interacts with SLC30A9 and RAD54L2/ARIP4. Interacts with MACROD1 (via macro domain). Interacts via the ligand-binding domain with LXXLL and FXXLF motifs from NCOA1, NCOA2, NCOA3 and MAGEA11. Interacts (via nuclear receptor DNA binding domain and nuclear receptor ligand binding domain) with NCOA4. The AR N-terminal poly-Gln region binds Ran resulting in enhancement of AR-mediated transactivation. Ran-binding decreases as the poly-Gln length increases. Interacts with HIP1 (via coiled coil domain). Interacts (via ligand-binding domain) with TRIM68. Interacts with TNK2. Interacts with USP26. Interacts with RNF6. Interacts (regulated by RNF6 probably through polyubiquitination) with RNF14; regulates AR transcriptional activity. Interacts with PRMT2 and TRIM24. Interacts with RACK1. Interacts with RANBP10; this interaction enhances dihydrotestosterone-induced AR transcriptional activity. Interacts with PRPF6 in a hormone-independent way; this interaction enhances dihydrotestosterone-induced AR transcriptional activity. Interacts with STK4/MST1. Interacts with ZIPK/DAPK3. Interacts with LPXN. Interacts with MAK. Part of a complex containing AR, MAK and NCOA3. Interacts with CRY1. Interacts with CCAR1 and GATA2. Interacts with ZNF318. Interacts with BUD31. Interacts with ARID4A. Interacts with ARID4B. Interacts (via NR LBD domain) with ZBTB7A; the interaction is direct and androgen-dependent. Interacts with NCOR1. Interacts with NCOR2. Interacts with CRY2 in a ligand-dependent manner. Phosphorylated in prostate cancer cells in response to several growth factors including EGF. Phosphorylation is induced by c-Src kinase (CSK). Tyr-526 is one of the major phosphorylation sites and an increase in phosphorylation and Src kinase activity is associated with prostate cancer progression. Phosphorylation by TNK2 enhances the DNA-binding and transcriptional activity. Phosphorylation at Ser-81 by CDK9 regulates AR promoter selectivity and cell growth. In terms of processing, sumoylated on Lys-385 (major) and Lys-512. Ubiquitinated. Deubiquitinated by USP26. 'Lys-6' and 'Lys-27'-linked polyubiquitination by RNF6 modulates AR transcriptional activity and specificity. Post-translationally, palmitoylated by ZDHHC7 and ZDHHC21. Palmitoylation is required for plasma membrane targeting and for rapid intracellular signaling via ERK and AKT kinases and cAMP generation.

Its subcellular location is the nucleus. It localises to the cytoplasm. Functionally, steroid hormone receptors are ligand-activated transcription factors that regulate eukaryotic gene expression and affect cellular proliferation and differentiation in target tissues. Transcription factor activity is modulated by bound coactivator and corepressor proteins like ZBTB7A that recruits NCOR1 and NCOR2 to the androgen response elements/ARE on target genes, negatively regulating androgen receptor signaling and androgen-induced cell proliferation. Transcription activation is also down-regulated by NR0B2. Activated, but not phosphorylated, by HIPK3 and ZIPK/DAPK3. The sequence is that of Androgen receptor (AR) from Pan troglodytes (Chimpanzee).